Reading from the N-terminus, the 117-residue chain is UPF0122 protein Teth39_1278 (117 aa).

The protein belongs to the UPF0122 family.

In terms of biological role, might take part in the signal recognition particle (SRP) pathway. This is inferred from the conservation of its genetic proximity to ftsY/ffh. May be a regulatory protein. This Thermoanaerobacter pseudethanolicus (strain ATCC 33223 / 39E) (Clostridium thermohydrosulfuricum) protein is UPF0122 protein Teth39_1278.